The following is a 433-amino-acid chain: MNSEPKPGLAMSSHFMGTDNQDQYKGTYAMNRLSIANLLNSPSSTLPTGNDFQNFGLERQINEGVLPQLLQNPWAINFWLQFQNAQLQPHLQYAALACSLVTENPLDLSNKTMNMLQKIGVFNSVTKSEDDESVAPEKPVDESLNKSNILRRNYTVEDLTQAVEDIRQGKLGTRRASVVYGIPRSTLRNKIYKLEAEGAIPSKVRRGKIAARRAEAEQKRCVEATAAAALLDAFGNQSDSSSSSPHASMCPSSPDSTNSSLEGTGETPEMSDKKSCSPLDPKWLESIWQNLFKTQGNVVPVDSANISNVDTHTPTPISEKSQKMHGNEEWKRSRPKRGQYRKYDKNALDEAVRSVRRGEMTVHRAGSFFGVPHSTLEYKVKERNLMRKKKDCLYSHDSSTSEDGSQLVTSTISEKSDSSSHTSTPIPFPISLV.

Residues 145 to 197 (NKSNILRRNYTVEDLTQAVEDIRQGKLGTRRASVVYGIPRSTLRNKIYKLEAE) enclose the HTH psq-type 1 domain. Residues 173–193 (TRRASVVYGIPRSTLRNKIYK) constitute a DNA-binding region (H-T-H motif). The segment covering 235–254 (GNQSDSSSSSPHASMCPSSP) has biased composition (low complexity). 2 disordered regions span residues 235–278 (GNQS…SCSP) and 304–338 (ANISNVDTHTPTPISEKSQKMHGNEEWKRSRPKRG). The span at 304–319 (ANISNVDTHTPTPISE) shows a compositional bias: polar residues. A compositionally biased stretch (basic and acidic residues) spans 320 to 332 (KSQKMHGNEEWKR). The HTH psq-type 2 domain occupies 334–386 (RPKRGQYRKYDKNALDEAVRSVRRGEMTVHRAGSFFGVPHSTLEYKVKERNLM). The H-T-H motif DNA-binding region spans 362–382 (VHRAGSFFGVPHSTLEYKVKE). Residues 393 to 433 (LYSHDSSTSEDGSQLVTSTISEKSDSSSHTSTPIPFPISLV) are disordered. The span at 396-408 (HDSSTSEDGSQLV) shows a compositional bias: polar residues. A compositionally biased stretch (low complexity) spans 409-424 (TSTISEKSDSSSHTST).

As to expression, expressed in AIM, RIC, AIZ, ADF, ADL, ASK, AWA, AUA, AIN, RIH (or RIR) and RIF head neurons and, in PVP, PVQ and DVA (or DVC) tail neurons, some intestinal cells, somatic gonad and vulva.

It is found in the nucleus. Functionally, may act as transcription activator. Plays a role in neurogenesis by regulating neurite pruning between left and right AIM neurons and left and right RIF neurons during larval development. Regulates olfactory plasticity. The chain is Mblk-1-related factor 1 from Caenorhabditis elegans.